We begin with the raw amino-acid sequence, 438 residues long: Serine hydroxymethyltransferase (438 aa).

Residues Leu119 and 123-125 contribute to the (6S)-5,6,7,8-tetrahydrofolate site; that span reads GHL. Lys228 bears the N6-(pyridoxal phosphate)lysine mark. 370-372 is a binding site for (6S)-5,6,7,8-tetrahydrofolate; the sequence is SPF.

This sequence belongs to the SHMT family. In terms of assembly, homodimer. The cofactor is pyridoxal 5'-phosphate.

It is found in the cytoplasm. The enzyme catalyses (6R)-5,10-methylene-5,6,7,8-tetrahydrofolate + glycine + H2O = (6S)-5,6,7,8-tetrahydrofolate + L-serine. The protein operates within one-carbon metabolism; tetrahydrofolate interconversion. It participates in amino-acid biosynthesis; glycine biosynthesis; glycine from L-serine: step 1/1. In terms of biological role, catalyzes the reversible interconversion of serine and glycine with tetrahydrofolate (THF) serving as the one-carbon carrier. This reaction serves as the major source of one-carbon groups required for the biosynthesis of purines, thymidylate, methionine, and other important biomolecules. Also exhibits THF-independent aldolase activity toward beta-hydroxyamino acids, producing glycine and aldehydes, via a retro-aldol mechanism. In Pelodictyon phaeoclathratiforme (strain DSM 5477 / BU-1), this protein is Serine hydroxymethyltransferase.